A 725-amino-acid chain; its full sequence is MTLSFAHFTYLFTILLGLTNIALASDPETILVTITKTNDANGVVTTTVSPALVSTSTIVQAGTTTLYTTWCPLTVSTSSAAEISPSISYATTLSRFSTLTLSTEVCSHEACPSSSTLPTTTLSVTSKFTSYICPTCHTTAISSLSEVGTTTVVSSSAIEPSSASIISPVTSTLSSTTSSNPTTTSLSSTSTSPSSTSTSPSSTSTSSSSTSTSSSSTSTSSSSTSTSPSSTSTSSSLTSTSSSSTSTSQSSTSTSSSSTSTSPSSTSTSSSSTSTSPSSKSTSASSTSTSSYSTSTSPSLTSSSPTLASTSPSSTSISSTFTDSTSSLGSSIASSSTSVSLYSPSTPVYSVPSTSSNVATPSMTSSTVETTVSSQSSSEYITKSSISTTIPSFSMSTYFTTVSGVTTMYTTWCPYSSESETSTLTSMHETVTTDATVCTHESCMPSQTTSLITSSIKMSTKNVATSVSTSTVESSYACSTCAETSHSYSSVQTASSSSVTQQTTSTKSWVSSMTTSDEDFNKHATGKYHVTSSGTSTISTSVSEATSTSSIDSESQEQSSHLLSTSVLSSSSLSATLSSDSTILLFSSVSSLSVEQSPVTTLQISSTSEILQPTSSTAIATISASTSSLSATSISTPSTSVESTIESSSLTPTVSSIFLSSSSAPSSLQTSVTTTEVSTTSISIQYQTSSMVTISQYMGSGSQTRLPLGKLVFAIMAVACNVIFS.

Positions 1–24 are cleaved as a signal peptide; it reads MTLSFAHFTYLFTILLGLTNIALA. A run of 19 repeats spans residues 53–149, 182–188, 189–195, 196–202, 203–209, 210–216, 217–223, 224–230, 231–237, 238–244, 245–251, 252–258, 259–265, 266–272, 273–279, 280–286, 287–293, 294–300, and 301–307. Positions 53-493 are 2 X approximate repeats; sequence VSTSTIVQAG…TSHSYSSVQT (441 aa). Disordered stretches follow at residues 168 to 318 and 335 to 363; these read PVTS…TSIS and SSTSVSLYSPSTPVYSVPSTSSNVATPSM. The segment at 182–307 is 18 X approximate tandem repeats, Ser/Thr-rich; sequence TTTSLSSTST…PSLTSSSPTL (126 aa). The 1-2 repeat unit spans residues 395–493; it reads MSTYFTTVSG…TSHSYSSVQT (99 aa). Residue glycine 699 is the site of GPI-anchor amidated glycine attachment. A propeptide spans 700–725 (removed in mature form); it reads SGSQTRLPLGKLVFAIMAVACNVIFS.

In terms of assembly, heterodimer; disulfide-linked. In terms of processing, extensively O-glycosylated by PMT1 and PMT2. The GPI-anchor is attached to the protein in the endoplasmic reticulum and serves to target the protein to the cell surface. There, the glucosamine-inositol phospholipid moiety is cleaved off and the GPI-modified mannoprotein is covalently attached via its lipidless GPI glycan remnant to the 1,6-beta-glucan of the outer cell wall layer.

It localises to the secreted. It is found in the cell wall. Its subcellular location is the membrane. Cell wall anchoring subunit of the a-agglutinin heterodimer. S.cerevisiae a and alpha cells express the complementary cell surface glycoproteins a-agglutinin and alpha-agglutinin, respectively, which interact with one another to promote cellular aggregation during mating. In Saccharomyces cerevisiae (strain ATCC 204508 / S288c) (Baker's yeast), this protein is A-agglutinin anchorage subunit (AGA1).